Here is a 90-residue protein sequence, read N- to C-terminus: MSENQTEKLVRTLSGRVVSDKMDKTVTVLVERKVKHPLIGKVVRRSNKFHAHDENNECKEGDLVMIEESRPLSKTKTWRVSKIVEKARIV.

This sequence belongs to the universal ribosomal protein uS17 family. In terms of assembly, part of the 30S ribosomal subunit.

In terms of biological role, one of the primary rRNA binding proteins, it binds specifically to the 5'-end of 16S ribosomal RNA. This Methylobacillus flagellatus (strain ATCC 51484 / DSM 6875 / VKM B-1610 / KT) protein is Small ribosomal subunit protein uS17.